The chain runs to 199 residues: Shikimate kinase (199 aa).

14–19 (GSGKST) provides a ligand contact to ATP. Mg(2+) is bound at residue Ser-18. Substrate is bound by residues Asp-36, Arg-60, and Gly-82. Residue Arg-120 coordinates ATP. Arg-147 is a binding site for substrate.

This sequence belongs to the shikimate kinase family. As to quaternary structure, monomer. It depends on Mg(2+) as a cofactor.

It localises to the cytoplasm. It carries out the reaction shikimate + ATP = 3-phosphoshikimate + ADP + H(+). It functions in the pathway metabolic intermediate biosynthesis; chorismate biosynthesis; chorismate from D-erythrose 4-phosphate and phosphoenolpyruvate: step 5/7. Functionally, catalyzes the specific phosphorylation of the 3-hydroxyl group of shikimic acid using ATP as a cosubstrate. This Chlorobium limicola (strain DSM 245 / NBRC 103803 / 6330) protein is Shikimate kinase.